We begin with the raw amino-acid sequence, 210 residues long: Large ribosomal subunit protein uL3 (210 aa).

The disordered stretch occupies residues 121–150 (GGIKRHGFHRGPMAHGSKYHRRPGSLGAKG).

It belongs to the universal ribosomal protein uL3 family. As to quaternary structure, part of the 50S ribosomal subunit. Forms a cluster with proteins L14 and L19.

Functionally, one of the primary rRNA binding proteins, it binds directly near the 3'-end of the 23S rRNA, where it nucleates assembly of the 50S subunit. This chain is Large ribosomal subunit protein uL3, found in Pelotomaculum thermopropionicum (strain DSM 13744 / JCM 10971 / SI).